Here is a 274-residue protein sequence, read N- to C-terminus: Nitrogenase iron protein (274 aa).

ATP is bound at residue Gly-8–Ser-15. Cys-94 lines the [4Fe-4S] cluster pocket. Arg-97 is modified (ADP-ribosylarginine; by dinitrogenase reductase ADP-ribosyltransferase). [4Fe-4S] cluster is bound at residue Cys-131.

It belongs to the NifH/BchL/ChlL family. As to quaternary structure, homodimer. [4Fe-4S] cluster serves as cofactor. In terms of processing, the reversible ADP-ribosylation of Arg-97 inactivates the nitrogenase reductase and regulates nitrogenase activity.

It catalyses the reaction N2 + 8 reduced [2Fe-2S]-[ferredoxin] + 16 ATP + 16 H2O = H2 + 8 oxidized [2Fe-2S]-[ferredoxin] + 2 NH4(+) + 16 ADP + 16 phosphate + 6 H(+). The key enzymatic reactions in nitrogen fixation are catalyzed by the nitrogenase complex, which has 2 components: the iron protein and the molybdenum-iron protein. This is Nitrogenase iron protein from Chlorobium phaeovibrioides (strain DSM 265 / 1930) (Prosthecochloris vibrioformis (strain DSM 265)).